The following is a 451-amino-acid chain: Coproporphyrinogen III oxidase (451 aa).

FAD contacts are provided by residues 10-15, 36-37, 58-61, Val242, Trp393, and 429-431; these read GGGISG, DP, GAEA, and IGV.

The protein belongs to the protoporphyrinogen/coproporphyrinogen oxidase family. Coproporphyrinogen III oxidase subfamily. Requires FAD as cofactor.

It localises to the cytoplasm. It catalyses the reaction coproporphyrinogen III + 3 O2 = coproporphyrin III + 3 H2O2. The protein operates within porphyrin-containing compound metabolism; protoheme biosynthesis. Involved in coproporphyrin-dependent heme b biosynthesis. Catalyzes the oxidation of coproporphyrinogen III to coproporphyrin III. The chain is Coproporphyrinogen III oxidase from Mycobacterium leprae (strain TN).